We begin with the raw amino-acid sequence, 729 residues long: Fatty acid oxidation complex subunit alpha (729 aa).

Residues Met-1–Lys-189 are enoyl-CoA hydratase/isomerase. Asp-296 lines the substrate pocket. The 3-hydroxyacyl-CoA dehydrogenase stretch occupies residues Glu-311 to Ala-729. NAD(+) is bound by residues Met-324, Asp-343, Val-400–Glu-402, Lys-407, and Ser-429. The active-site For 3-hydroxyacyl-CoA dehydrogenase activity is His-450. Asn-453 lines the NAD(+) pocket. Residues Asn-500 and Tyr-660 each contribute to the substrate site. Positions Arg-708–Ala-729 are disordered.

This sequence in the N-terminal section; belongs to the enoyl-CoA hydratase/isomerase family. It in the C-terminal section; belongs to the 3-hydroxyacyl-CoA dehydrogenase family. Heterotetramer of two alpha chains (FadB) and two beta chains (FadA).

It catalyses the reaction a (3S)-3-hydroxyacyl-CoA + NAD(+) = a 3-oxoacyl-CoA + NADH + H(+). The catalysed reaction is a (3S)-3-hydroxyacyl-CoA = a (2E)-enoyl-CoA + H2O. The enzyme catalyses a 4-saturated-(3S)-3-hydroxyacyl-CoA = a (3E)-enoyl-CoA + H2O. It carries out the reaction (3S)-3-hydroxybutanoyl-CoA = (3R)-3-hydroxybutanoyl-CoA. It catalyses the reaction a (3Z)-enoyl-CoA = a 4-saturated (2E)-enoyl-CoA. The catalysed reaction is a (3E)-enoyl-CoA = a 4-saturated (2E)-enoyl-CoA. It participates in lipid metabolism; fatty acid beta-oxidation. Involved in the aerobic and anaerobic degradation of long-chain fatty acids via beta-oxidation cycle. Catalyzes the formation of 3-oxoacyl-CoA from enoyl-CoA via L-3-hydroxyacyl-CoA. It can also use D-3-hydroxyacyl-CoA and cis-3-enoyl-CoA as substrate. The chain is Fatty acid oxidation complex subunit alpha from Citrobacter koseri (strain ATCC BAA-895 / CDC 4225-83 / SGSC4696).